A 139-amino-acid chain; its full sequence is Nucleoside diphosphate kinase (139 aa).

Residues lysine 10, phenylalanine 58, arginine 86, threonine 92, arginine 104, and asparagine 114 each coordinate ATP. Histidine 117 serves as the catalytic Pros-phosphohistidine intermediate.

This sequence belongs to the NDK family. Homotetramer. Requires Mg(2+) as cofactor.

The protein resides in the cytoplasm. It catalyses the reaction a 2'-deoxyribonucleoside 5'-diphosphate + ATP = a 2'-deoxyribonucleoside 5'-triphosphate + ADP. It carries out the reaction a ribonucleoside 5'-diphosphate + ATP = a ribonucleoside 5'-triphosphate + ADP. In terms of biological role, major role in the synthesis of nucleoside triphosphates other than ATP. The ATP gamma phosphate is transferred to the NDP beta phosphate via a ping-pong mechanism, using a phosphorylated active-site intermediate. The polypeptide is Nucleoside diphosphate kinase (Rhodococcus jostii (strain RHA1)).